Reading from the N-terminus, the 309-residue chain is Glycine--tRNA ligase alpha subunit (309 aa).

It belongs to the class-II aminoacyl-tRNA synthetase family. In terms of assembly, tetramer of two alpha and two beta subunits.

It localises to the cytoplasm. The enzyme catalyses tRNA(Gly) + glycine + ATP = glycyl-tRNA(Gly) + AMP + diphosphate. The chain is Glycine--tRNA ligase alpha subunit from Anaeromyxobacter sp. (strain K).